A 122-amino-acid polypeptide reads, in one-letter code: Putative syntaxin 6 (122 aa).

Residues 1–100 (MSNYRYSKLN…AKLTHLEDES (100 aa)) are Cytoplasmic-facing. The t-SNARE coiled-coil homology domain occupies 31 to 93 (EQIIQEQDDE…DTAMKKMAKL (63 aa)). Residues 101-121 (SQCKMIMVLSALLFFLVFVLL) traverse the membrane as a helical; Anchor for type IV membrane protein segment. Position 122 (Val122) is a topological domain, extracellular.

The protein belongs to the syntaxin family.

It is found in the membrane. In terms of biological role, SNARE promoting movement of transport vesicles to target membranes. Potentially functions in retrograde trafficking and in the endocytic recycling pathway. This Caenorhabditis elegans protein is Putative syntaxin 6 (syx-6).